Reading from the N-terminus, the 143-residue chain is Hemoglobin subunit alpha-1 (143 aa).

Position 2 is an N-acetylserine (Ser-2). The Globin domain occupies 2-143 (SLSAKDKATV…LALALCEKYR (142 aa)). Position 60 (His-60) interacts with O2. Residue His-89 participates in heme b binding.

The protein belongs to the globin family. Hb 1 is a heterotetramer of two alpha-1 and two beta-1 chains. As to expression, red blood cells.

Its function is as follows. Involved in oxygen transport from gills to the various peripheral tissues. This Boreogadus saida (Polar cod) protein is Hemoglobin subunit alpha-1 (hba1).